The chain runs to 100 residues: Co-chaperonin GroES (100 aa).

This sequence belongs to the GroES chaperonin family. In terms of assembly, heptamer of 7 subunits arranged in a ring. Interacts with the chaperonin GroEL.

The protein localises to the cytoplasm. Functionally, together with the chaperonin GroEL, plays an essential role in assisting protein folding. The GroEL-GroES system forms a nano-cage that allows encapsulation of the non-native substrate proteins and provides a physical environment optimized to promote and accelerate protein folding. GroES binds to the apical surface of the GroEL ring, thereby capping the opening of the GroEL channel. The sequence is that of Co-chaperonin GroES from Mycobacterium tuberculosis (strain CDC 1551 / Oshkosh).